Here is a 623-residue protein sequence, read N- to C-terminus: Chaperone protein DnaK (623 aa).

The span at 582 to 603 (QQQQAAEQAAQQQSGGQQASGS) shows a compositional bias: low complexity. Residues 582–623 (QQQQAAEQAAQQQSGGQQASGSNPGKDPNVVDADYEVVNDKK) are disordered. The segment covering 614-623 (ADYEVVNDKK) has biased composition (acidic residues).

This sequence belongs to the heat shock protein 70 family.

Its function is as follows. Acts as a chaperone. This Methanocella arvoryzae (strain DSM 22066 / NBRC 105507 / MRE50) protein is Chaperone protein DnaK.